The primary structure comprises 300 residues: Dioxygenase FUM3 (300 aa).

Fe cation is bound by residues His-146, Asp-148, and His-222.

It belongs to the PhyH family. Homodimer. The cofactor is Fe cation.

It functions in the pathway mycotoxin biosynthesis. Functionally, dioxygenase; part of the gene cluster that mediates the biosynthesis of fumonisins B1 (FB1), B2 (FB2), B3 (FB3), and B4 (FB4), which are carcinogenic mycotoxins. Within the pathway, FUM3 performs the C-5 hydroxylation present in FB1 and FB2 and which occurs late in the biosynthesis. The biosynthesis starts with the FUM1-catalyzed carbon chain assembly from one molecule of acetyl-CoA, eight molecules of malonyl-CoA, and two molecules of methionine (in S-adenosyl form). The C18 polyketide chain is released from the enzyme by a nucleophilic attack of a carbanion, which is derived from R-carbon of alanine by decarboxylation, on the carbonyl carbon of polyketide acyl chain. This step is catalyzed by the pyridoxal 5'-phosphate-dependent aminoacyl transferase FUM8. The resultant 3-keto intermediate is then stereospecifically reduced to a 3-hydroxyl product by reductase FUM13. Subsequent oxidations at C-10 by the cytochrome P450 monooxygenase FUM2, C-14 and C-15 by FUM6, FUM12 or FUM15, tricarballylic esterification of the hydroxyl groups on C-14 and C-15 by acyltransferase FUM14, and C-5 hydroxylation by 2-keto-glutarate-dependent dioxygenase FUM3 furnish the biosynthesis of fumonisins. The tricarballylic moieties are most likely derived from the citric acid cycle, and their addition to the carbon backbone may involve FUM7, FUM10, FUM11 and FUM14. This is Dioxygenase FUM3 from Gibberella moniliformis (strain M3125 / FGSC 7600) (Maize ear and stalk rot fungus).